Consider the following 413-residue polypeptide: Pyruvate dehydrogenase complex subunit homolog DDB_G0271564, mitochondrial (413 aa).

The N-terminal 19 residues, 1–19 (MNRILKQVSNTKGKGIRFY), are a transit peptide targeting the mitochondrion. The 39-residue stretch at 29 to 67 (YMFPSVRRLLVEYGINSSKEVTATGPQNRLLKGDVLAYI) folds into the Peripheral subunit-binding (PSBD) domain.

Belongs to the 2-oxoacid dehydrogenase family.

The protein localises to the mitochondrion. The pyruvate dehydrogenase complex catalyzes the overall conversion of pyruvate to acetyl-CoA and CO(2). It contains multiple copies of three enzymatic components: pyruvate dehydrogenase (E1), dihydrolipoamide acetyltransferase (E2) and lipoamide dehydrogenase (E3). In Dictyostelium discoideum (Social amoeba), this protein is Pyruvate dehydrogenase complex subunit homolog DDB_G0271564, mitochondrial (pdhX).